The chain runs to 395 residues: Chalcone synthase (395 aa).

An N-acetylvaline modification is found at V2. Residue C169 is part of the active site.

Belongs to the thiolase-like superfamily. Chalcone/stilbene synthases family.

The enzyme catalyses (E)-4-coumaroyl-CoA + 3 malonyl-CoA + 3 H(+) = 2',4,4',6'-tetrahydroxychalcone + 3 CO2 + 4 CoA. It functions in the pathway secondary metabolite biosynthesis; flavonoid biosynthesis. In terms of biological role, the primary product of this enzyme is 4,2',4',6'-tetrahydroxychalcone (also termed naringenin-chalcone or chalcone) which can under specific conditions spontaneously isomerize into naringenin. The polypeptide is Chalcone synthase (CHS) (Cardamine amara (Large bitter-cress)).